Here is a 556-residue protein sequence, read N- to C-terminus: CTP synthase (556 aa).

The segment at 1 to 266 is amidoligase domain; the sequence is MKYIFVTGGV…GKVVEDLLGL (266 aa). Ser12 is a binding site for CTP. Ser12 is a UTP binding site. 13–18 contacts ATP; sequence SLGKGV. Tyr53 provides a ligand contact to L-glutamine. Position 70 (Asp70) interacts with ATP. 2 residues coordinate Mg(2+): Asp70 and Glu140. CTP contacts are provided by residues 147–149, 187–192, and Lys223; these read DIE and KTKPTQ. Residues 187–192 and Lys223 contribute to the UTP site; that span reads KTKPTQ. Residues 291-544 enclose the Glutamine amidotransferase type-1 domain; the sequence is TIAIAGKYTE…VKAALRGQSS (254 aa). Gly356 is an L-glutamine binding site. Catalysis depends on Cys383, which acts as the Nucleophile; for glutamine hydrolysis. Residues 384 to 387, Glu407, and Arg467 each bind L-glutamine; that span reads LGMQ. Residues His517 and Glu519 contribute to the active site.

Belongs to the CTP synthase family. Homotetramer.

It carries out the reaction UTP + L-glutamine + ATP + H2O = CTP + L-glutamate + ADP + phosphate + 2 H(+). The enzyme catalyses L-glutamine + H2O = L-glutamate + NH4(+). The catalysed reaction is UTP + NH4(+) + ATP = CTP + ADP + phosphate + 2 H(+). It participates in pyrimidine metabolism; CTP biosynthesis via de novo pathway; CTP from UDP: step 2/2. With respect to regulation, allosterically activated by GTP, when glutamine is the substrate; GTP has no effect on the reaction when ammonia is the substrate. The allosteric effector GTP functions by stabilizing the protein conformation that binds the tetrahedral intermediate(s) formed during glutamine hydrolysis. Inhibited by the product CTP, via allosteric rather than competitive inhibition. Catalyzes the ATP-dependent amination of UTP to CTP with either L-glutamine or ammonia as the source of nitrogen. Regulates intracellular CTP levels through interactions with the four ribonucleotide triphosphates. The sequence is that of CTP synthase from Deinococcus deserti (strain DSM 17065 / CIP 109153 / LMG 22923 / VCD115).